The sequence spans 111 residues: Colicin-Ia immunity protein (111 aa).

A run of 2 helical transmembrane segments spans residues L33–I53 and T85–I105.

Its subcellular location is the cell membrane. This protein is able to protect a cell, which harbors the plasmid ColIa-CA53 encoding colicin Ia, against colicin Ia. This chain is Colicin-Ia immunity protein, found in Escherichia coli.